The primary structure comprises 87 residues: Large ribosomal subunit protein bL27 (87 aa).

The protein belongs to the bacterial ribosomal protein bL27 family.

The protein is Large ribosomal subunit protein bL27 of Wigglesworthia glossinidia brevipalpis.